A 323-amino-acid chain; its full sequence is Cuticle collagen 39 (323 aa).

Residues 1–28 (MTGPTCLAVVAGISGVFVFGALFSVAQI) form the signal peptide. Over residues 80–89 (QCNCGPQASN) the composition is skewed to polar residues. A disordered region spans residues 80-293 (QCNCGPQASN…GAAEQGYRHR (214 aa)). Triple-helical region regions lie at residues 93–125 (GPPGPPGAPGDRGLDGQPGGAGNPGQPGVAGPK), 138–200 (GSPG…GGQR), and 203–265 (GLPG…PGAD). Positions 108-117 (GQPGGAGNPG) are enriched in gly residues. The span at 136–146 (PAGSPGPAGAP) shows a compositional bias: low complexity. Over residues 159 to 168 (GHPGQGGSQG) the composition is skewed to gly residues. The span at 169–191 (PAGPRGPAGDAGAPGQVGAPGNP) shows a compositional bias: low complexity. Residues 224-233 (GQSGGQGQQG) show a composition bias toward gly residues. Over residues 234–267 (PAGPAGPDGQPGQPGQDGQAGAPGNDGAPGADAA) the composition is skewed to low complexity.

It belongs to the cuticular collagen family. Collagen polypeptide chains are complexed within the cuticle by disulfide bonds and other types of covalent cross-links.

In terms of biological role, nematode cuticles are composed largely of collagen-like proteins. The cuticle functions both as an exoskeleton and as a barrier to protect the worm from its environment. This Caenorhabditis elegans protein is Cuticle collagen 39 (col-39).